The primary structure comprises 214 residues: Probable nicotinate-nucleotide adenylyltransferase (214 aa).

Belongs to the NadD family.

The enzyme catalyses nicotinate beta-D-ribonucleotide + ATP + H(+) = deamido-NAD(+) + diphosphate. Its pathway is cofactor biosynthesis; NAD(+) biosynthesis; deamido-NAD(+) from nicotinate D-ribonucleotide: step 1/1. Catalyzes the reversible adenylation of nicotinate mononucleotide (NaMN) to nicotinic acid adenine dinucleotide (NaAD). The protein is Probable nicotinate-nucleotide adenylyltransferase of Pelodictyon phaeoclathratiforme (strain DSM 5477 / BU-1).